Consider the following 4118-residue polypeptide: BEACH domain-containing protein lvsB (4118 aa).

Residues 1 to 35 form a disordered region; the sequence is MNRNFNNINNNNNNNNNYHGYQYHQQQQQQNQQQQ. The chain crosses the membrane as a helical span at residues 198–218; that stretch reads GIPLSFLNFLITILLRILSLP. The segment covering 236–257 has biased composition (low complexity); it reads NFSGNNNNNFNNNNHYFNNNHN. Disordered stretches follow at residues 236-267, 332-382, and 621-644; these read NFSGNNNNNFNNNNHYFNNNHNNHNHHYQHHQ, PLSS…SKNN, and ISSSDNNNNNNNNSDGVNDDKNNN. Over residues 258–267 the composition is skewed to basic residues; it reads NHNHHYQHHQ. Composition is skewed to low complexity over residues 332 to 381 and 621 to 636; these read PLSS…NSKN and ISSSDNNNNNNNNSDG. A helical transmembrane segment spans residues 827-847; that stretch reads YLVLYMIVTEILSLLLELLVP. Residues 1155-1170 are compositionally biased toward low complexity; sequence NGGSISPSSIINNMNS. Disordered regions lie at residues 1155-1213, 1599-1622, 1643-1681, 1928-1968, 2015-2044, 2537-2574, 2702-2741, 2754-2791, 2902-3007, 3245-3265, and 3348-3418; these read NGGS…FNNN, ANTTTNSTTASTTTTTTNSTTAVS, NSGISRENSLGGRDSIGSNSSSSSSSSNSGVSSGSSTNL, GNFL…ISSS, STNNNSNNSNNSNSNNNNNNNNTNYNSNSL, RRGSSSSSTNSTTNNNNNNSSTTTTSNNNNNNNENNNE, FSPSRSKEKEKEKEKEKEKEKEKEKERERERETTNVTSDS, DQSNEESSTTDSDSTSDNNNNNNRNSYSGRNIRGNGIN, NTNS…NSNE, PLIPDLSTPSTPPSPQNTKDQ, and KTTA…NIVK. Composition is skewed to low complexity over residues 1657–1678 and 1935–1968; these read SIGSNSSSSSSSSNSGVSSGSS and SSSNNNLRERSINNNNNNNNNSNNNNNNNSISSS. Low complexity predominate over residues 2540–2571; the sequence is SSSSSTNSTTNNNNNNSSTTTTSNNNNNNNEN. A coiled-coil region spans residues 2705–2738; the sequence is SRSKEKEKEKEKEKEKEKEKEKERERERETTNVT. A compositionally biased stretch (basic and acidic residues) spans 2706-2734; it reads RSKEKEKEKEKEKEKEKEKEKERERERET. Low complexity-rich tracts occupy residues 2758-2791 and 2902-2947; these read EESSTTDSDSTSDNNNNNNRNSYSGRNIRGNGIN and NTNS…NSTN. The segment covering 2948-2962 has biased composition (polar residues); the sequence is QTITDTTLSPASSNV. Composition is skewed to low complexity over residues 2963–2980 and 2988–3006; these read SISNQSTPISNNNNNNNS and SNINIPPTINISDSNSNSN. Residues 3303–3479 enclose the BEACH-type PH domain; the sequence is KLGEKVNEVF…DRDIVYDLIM (177 aa). Residues 3357–3411 are compositionally biased toward low complexity; it reads SNNNNNNNNNNNNNNNNNNNNSNDTTSSINSTTATNTNTTNTTTTNTTTTTTTTN. The BEACH domain occupies 3491-3782; the sequence is AEVHGNILKM…QIFTKPHPKK (292 aa). WD repeat units follow at residues 3868–3907, 3924–3963, 3984–4027, 4029–4073, and 4075–4114; these read VLNDDIICGDITKNGRLFVTGGTAGTVKVWKRCNNDGTIM, GHTNSILCVTVSQEYSIIVSGSKDSNCIIWDLNRLTYINS, TFET…LAKQ, FVND…KIRT, and VSKSTITALAVSKDNTQLISGDINGLIECLSSRSFDGYSS.

It is found in the membrane. The protein resides in the lysosome. It localises to the endosome. Its function is as follows. Involved in negative regulation of lysosome biogenesis, by limiting the heterotypic fusion of early endosomes and postlysosomal compartments. This is BEACH domain-containing protein lvsB (lvsB) from Dictyostelium discoideum (Social amoeba).